Consider the following 192-residue polypeptide: Thioredoxin-like 3-2, chloroplastic (192 aa).

The N-terminal 55 residues, 1–55 (MSEIVNLSSSLRSLNPKISPLVPPYRQTSSSFSRPRNFKYHSFTDKICLAAERIR), are a transit peptide targeting the chloroplast. In terms of domain architecture, Thioredoxin spans 66 to 191 (LQELDDSPVS…VREMIENDSI (126 aa)). Catalysis depends on nucleophile residues cysteine 110 and cysteine 113. A disulfide bond links cysteine 110 and cysteine 113.

Belongs to the thioredoxin family.

It is found in the plastid. The protein localises to the chloroplast stroma. Functionally, probable thiol-disulfide oxidoreductase that may participate in various redox reactions. This is Thioredoxin-like 3-2, chloroplastic (WCRKC2) from Arabidopsis thaliana (Mouse-ear cress).